The chain runs to 404 residues: Cysteine desulfurase IscS (404 aa).

Pyridoxal 5'-phosphate is bound by residues 75–76 (AT), Asn-155, Gln-183, and 203–205 (SAH). At Lys-206 the chain carries N6-(pyridoxal phosphate)lysine. Thr-243 contributes to the pyridoxal 5'-phosphate binding site. Catalysis depends on Cys-328, which acts as the Cysteine persulfide intermediate. Cys-328 provides a ligand contact to [2Fe-2S] cluster.

It belongs to the class-V pyridoxal-phosphate-dependent aminotransferase family. NifS/IscS subfamily. As to quaternary structure, homodimer. Forms a heterotetramer with IscU, interacts with other sulfur acceptors. It depends on pyridoxal 5'-phosphate as a cofactor.

The protein localises to the cytoplasm. It catalyses the reaction (sulfur carrier)-H + L-cysteine = (sulfur carrier)-SH + L-alanine. It participates in cofactor biosynthesis; iron-sulfur cluster biosynthesis. Its function is as follows. Master enzyme that delivers sulfur to a number of partners involved in Fe-S cluster assembly, tRNA modification or cofactor biosynthesis. Catalyzes the removal of elemental sulfur atoms from cysteine to produce alanine. Functions as a sulfur delivery protein for Fe-S cluster synthesis onto IscU, an Fe-S scaffold assembly protein, as well as other S acceptor proteins. This Colwellia psychrerythraea (strain 34H / ATCC BAA-681) (Vibrio psychroerythus) protein is Cysteine desulfurase IscS.